The following is a 253-amino-acid chain: NADH-quinone oxidoreductase subunit C (253 aa).

Disordered stretches follow at residues 1 to 33 and 234 to 253; these read MSPD…DTEP and IPVE…RAYS.

This sequence belongs to the complex I 30 kDa subunit family. In terms of assembly, NDH-1 is composed of 14 different subunits. Subunits NuoB, C, D, E, F, and G constitute the peripheral sector of the complex.

It is found in the cell membrane. It catalyses the reaction a quinone + NADH + 5 H(+)(in) = a quinol + NAD(+) + 4 H(+)(out). In terms of biological role, NDH-1 shuttles electrons from NADH, via FMN and iron-sulfur (Fe-S) centers, to quinones in the respiratory chain. The immediate electron acceptor for the enzyme in this species is believed to be a menaquinone. Couples the redox reaction to proton translocation (for every two electrons transferred, four hydrogen ions are translocated across the cytoplasmic membrane), and thus conserves the redox energy in a proton gradient. The chain is NADH-quinone oxidoreductase subunit C from Nocardia farcinica (strain IFM 10152).